Reading from the N-terminus, the 409-residue chain is Salivary endonuclease (409 aa).

A signal peptide spans 1–20 (MHLQLNLCAILLSVLNGIQG). Asn-37 and Asn-102 each carry an N-linked (GlcNAc...) asparagine glycan. Residue His-216 is the Proton acceptor of the active site. Asn-246 lines the Mg(2+) pocket. N-linked (GlcNAc...) asparagine glycans are attached at residues Asn-351 and Asn-381.

The protein belongs to the DNA/RNA non-specific endonuclease family. Mg(2+) serves as cofactor. Salivary gland.

It localises to the secreted. Functionally, hydrolyzes single-stranded and double-stranded DNA with little sequence specificity. Inhibits contact pathway of blood coagulation in the host by preventing activation of coagulation factor XII (F12) triggered by soluble DNA. Modestly up-regulates expression of CSF2, CXCL1 and CXCL8 in cultured human dermal microvascular endothelial cells. At higher doses promotes host neutrophil recruitment at the injection site in mouse model. In terms of biological role, (Microbial infection) Increases Leishmania major survival in the host by disrupting parasite-induced neutrophil extracellular traps. Exacerbates L.major parasite infectivity and increases cutaneous lesions in mouse model. The chain is Salivary endonuclease from Lutzomyia longipalpis (Sand fly).